Reading from the N-terminus, the 238-residue chain is Transmembrane protein 127 (238 aa).

N-acetylmethionine is present on M1. Over residues 1–11 (MYAPGGAGLPG) the composition is skewed to gly residues. The tract at residues 1 to 27 (MYAPGGAGLPGGRRRRSPGSSALPKQP) is disordered. Residue S17 is modified to Phosphoserine. 3 consecutive transmembrane segments (helical) span residues 96-116 (IAAF…LDVF), 130-150 (AFAH…SYWA), and 169-189 (VYVT…ASIL).

Belongs to the TMEM127 family.

Its subcellular location is the cell membrane. It is found in the cytoplasm. In terms of biological role, controls cell proliferation acting as a negative regulator of TOR signaling pathway mediated by mTORC1. May act as a tumor suppressor. This chain is Transmembrane protein 127 (Tmem127), found in Mus musculus (Mouse).